Reading from the N-terminus, the 406-residue chain is Nodal homolog (406 aa).

Positions 1 to 18 (MAFLTAVLYLGFACISQG) are cleaved as a signal peptide. The propeptide occupies 19–281 (LPTWPDRVES…RVPGIRRHRR (263 aa)). Residues Asn71, Asn136, and Asn172 are each glycosylated (N-linked (GlcNAc...) asparagine). Positions 195–222 (KERAERGSGMSNAEFIDAPGPSQQYNPH) are disordered. 3 disulfide bridges follow: Cys306–Cys372, Cys335–Cys403, and Cys339–Cys405. N-linked (GlcNAc...) asparagine glycosylation is present at Asn344.

It belongs to the TGF-beta family. Homodimer; disulfide-linked. Interacts with, and is inhibited by cer1 and gdf10/bmp3b. As to expression, in the first phase of expression, localized to the vegetal region of the blastula. During gastrulation (stage 10.5), this expression disappears and instead becomes localized to the dorsal marginal zone, with enrichment in the organizer. During the second phase of expression in neurulae and tailbud embryos, expression restarts firstly in two symmetric patches near the posterior end of the notochord, and then in a large asymmetrical domain in the left lateral plate mesoderm.

The protein localises to the secreted. Its function is as follows. Cooperation and regulatory loops of multiple nodals are essential for mesendoderm patterning in early embryos. Essential for mesoderm formation and axial patterning during embryonic development. Activates the activin-like signaling pathway to induce dorsal and ventral mesoderm in animal cap ectoderm. In addition, also dorsalizes ventral marginal zone (VMZ) tissues during gastrulation. Acts in a downstream signaling cascade via cripto and cer1 to mediate cardiogenesis in embryonic mesoderm. Directs the orientation of the left-right axis by driving the left-specific gene cascade in the left lateral plate mesoderm. The chain is Nodal homolog from Xenopus laevis (African clawed frog).